The following is a 339-amino-acid chain: uncharacterized protein (339 aa).

This is an uncharacterized protein from Treponema pallidum (strain Nichols).